The sequence spans 275 residues: N-acetyltransferase YodP (275 aa).

One can recognise an N-acetyltransferase domain in the interval 125 to 271; sequence FTMRKAETND…AEGLENMNIW (147 aa).

It belongs to the acetyltransferase family.

The catalysed reaction is (3S)-3,6-diaminohexanoate + acetyl-CoA = (3S)-6-acetamido-3-aminohexanoate + CoA + H(+). Its function is as follows. In vitro, is able to catalyze the acetylation of beta-lysine to N6-acetyl-beta-lysine, an archaeal osmolyte produced by methanogenic archaea. Its physiological function has not yet been elucidated. The sequence is that of N-acetyltransferase YodP (yodP) from Bacillus subtilis (strain 168).